The sequence spans 371 residues: tRNA-specific 2-thiouridylase MnmA (371 aa).

ATP-binding positions include 12–19 (GMSGGVDS) and M38. The segment at 98–100 (NPD) is interaction with target base in tRNA. The active-site Nucleophile is C103. C103 and C200 form a disulfide bridge. G127 serves as a coordination point for ATP. An interaction with tRNA region spans residues 150–152 (KDQ). The active-site Cysteine persulfide intermediate is the C200. The interval 308-309 (RY) is interaction with tRNA.

Belongs to the MnmA/TRMU family.

Its subcellular location is the cytoplasm. The enzyme catalyses S-sulfanyl-L-cysteinyl-[protein] + uridine(34) in tRNA + AH2 + ATP = 2-thiouridine(34) in tRNA + L-cysteinyl-[protein] + A + AMP + diphosphate + H(+). In terms of biological role, catalyzes the 2-thiolation of uridine at the wobble position (U34) of tRNA, leading to the formation of s(2)U34. The sequence is that of tRNA-specific 2-thiouridylase MnmA from Oceanobacillus iheyensis (strain DSM 14371 / CIP 107618 / JCM 11309 / KCTC 3954 / HTE831).